The following is a 170-amino-acid chain: Photosystem I assembly protein Ycf3 (170 aa).

3 TPR repeats span residues 35-68 (AFTYYRDGMLAQSEGNYAEALQNYYEAMRLEIDP), 72-105 (SYILYNIGLIHTSNGEHTKALEYYFRALERNPFL), and 120-153 (GEQAILQGDSEIAEAWFDQAAEYWKQAIALTPGN).

Belongs to the Ycf3 family.

The protein resides in the plastid. It localises to the chloroplast thylakoid membrane. In terms of biological role, essential for the assembly of the photosystem I (PSI) complex. May act as a chaperone-like factor to guide the assembly of the PSI subunits. The protein is Photosystem I assembly protein Ycf3 of Zea mays (Maize).